The chain runs to 465 residues: Glutamate--tRNA ligase (465 aa).

The short motif at 8 to 18 (PSPTGHLHIGG) is the 'HIGH' region element. Zn(2+)-binding residues include cysteine 97, cysteine 99, cysteine 124, and glutamate 126. Positions 234–238 (RLSKR) match the 'KMSKS' region motif. ATP is bound at residue lysine 237.

Belongs to the class-I aminoacyl-tRNA synthetase family. Glutamate--tRNA ligase type 1 subfamily. As to quaternary structure, monomer. It depends on Zn(2+) as a cofactor.

The protein resides in the cytoplasm. The catalysed reaction is tRNA(Glu) + L-glutamate + ATP = L-glutamyl-tRNA(Glu) + AMP + diphosphate. Its function is as follows. Catalyzes the attachment of glutamate to tRNA(Glu) in a two-step reaction: glutamate is first activated by ATP to form Glu-AMP and then transferred to the acceptor end of tRNA(Glu). This Thermodesulfovibrio yellowstonii (strain ATCC 51303 / DSM 11347 / YP87) protein is Glutamate--tRNA ligase.